The primary structure comprises 235 residues: MSKNSKAYKEAAEKVDKTRLYSPLEAAKLAKETSSKKQDATVEVAIRLGVDPRKADQMVRGTVNLPHGTGKTARVAVFAVGDKAEQAEAAGADIVGSDDLIEKIQGGFLDFDAAIATPDQMAKVGRIARILGPRGLMPNPKTGTVTPDVAKAVSDIKGGKINFRVDKQANLHFVIGKASFDESKLAENYGAALDEVLRAKPSSSKGRYLKKVVVSTTTGPGIPVDPSITRNFTEE.

This sequence belongs to the universal ribosomal protein uL1 family. As to quaternary structure, part of the 50S ribosomal subunit.

Its function is as follows. Binds directly to 23S rRNA. The L1 stalk is quite mobile in the ribosome, and is involved in E site tRNA release. In terms of biological role, protein L1 is also a translational repressor protein, it controls the translation of the L11 operon by binding to its mRNA. This is Large ribosomal subunit protein uL1 from Mycolicibacterium vanbaalenii (strain DSM 7251 / JCM 13017 / BCRC 16820 / KCTC 9966 / NRRL B-24157 / PYR-1) (Mycobacterium vanbaalenii).